The chain runs to 747 residues: Sushi domain-containing protein 1 (747 aa).

The N-terminal stretch at Met-1–Gly-29 is a signal peptide. Over Ala-30–Met-721 the chain is Extracellular. Positions Gly-35 to Val-72 constitute an EGF-like 1 domain. Cystine bridges form between Cys-39–Cys-48, Cys-42–Cys-57, Cys-59–Cys-71, Cys-77–Cys-91, and Cys-85–Cys-100. The region spanning Asp-73–Asn-112 is the EGF-like 2; calcium-binding domain. Asn-87 and Asn-112 each carry an N-linked (GlcNAc...) asparagine glycan. Residues Asp-125 to Pro-162 form the EGF-like 3; calcium-binding domain. Cystine bridges form between Cys-129-Cys-141, Cys-135-Cys-150, Cys-179-Cys-221, Cys-206-Cys-234, Cys-239-Cys-281, and Cys-266-Cys-294. 2 consecutive Sushi domains span residues Ile-177 to Glu-236 and Ile-237 to Glu-296. Asn-193 carries an N-linked (GlcNAc...) asparagine glycan. N-linked (GlcNAc...) asparagine glycosylation occurs at Asn-253. 3 N-linked (GlcNAc...) asparagine glycosylation sites follow: Asn-348, Asn-367, and Asn-563. The helical transmembrane segment at Leu-722–Leu-742 threads the bilayer. The Cytoplasmic portion of the chain corresponds to Ser-743–Val-747.

The protein localises to the membrane. The chain is Sushi domain-containing protein 1 (SUSD1) from Homo sapiens (Human).